The chain runs to 116 residues: Hydrogenase maturation factor HypA (116 aa).

His2 serves as a coordination point for Ni(2+). Zn(2+)-binding residues include Cys73, Cys76, Cys89, and Cys92.

This sequence belongs to the HypA/HybF family.

Functionally, involved in the maturation of [NiFe] hydrogenases. Required for nickel insertion into the metal center of the hydrogenase. This Chlorobium limicola (strain DSM 245 / NBRC 103803 / 6330) protein is Hydrogenase maturation factor HypA.